A 38-amino-acid polypeptide reads, in one-letter code: Glucagon-like peptide (38 aa).

It belongs to the glucagon family.

Its subcellular location is the secreted. This is Glucagon-like peptide from Hydrolagus colliei (Spotted ratfish).